Reading from the N-terminus, the 360-residue chain is Aminomethyltransferase (360 aa).

The protein belongs to the GcvT family. The glycine cleavage system is composed of four proteins: P, T, L and H.

It catalyses the reaction N(6)-[(R)-S(8)-aminomethyldihydrolipoyl]-L-lysyl-[protein] + (6S)-5,6,7,8-tetrahydrofolate = N(6)-[(R)-dihydrolipoyl]-L-lysyl-[protein] + (6R)-5,10-methylene-5,6,7,8-tetrahydrofolate + NH4(+). The glycine cleavage system catalyzes the degradation of glycine. The chain is Aminomethyltransferase from Pseudomonas aeruginosa (strain ATCC 15692 / DSM 22644 / CIP 104116 / JCM 14847 / LMG 12228 / 1C / PRS 101 / PAO1).